Here is a 295-residue protein sequence, read N- to C-terminus: Protease HtpX (295 aa).

The next 2 helical transmembrane spans lie at 4–24 and 41–61; these read ILLF…TLSL and SQLL…SLFI. His-147 provides a ligand contact to Zn(2+). The active site involves Glu-148. Position 151 (His-151) interacts with Zn(2+). 2 helical membrane-spanning segments follow: residues 158–178 and 199–219; these read VTLA…ARII and IATI…VMWF. Glu-224 is a Zn(2+) binding site.

The protein belongs to the peptidase M48B family. Zn(2+) is required as a cofactor.

It localises to the cell inner membrane. This is Protease HtpX from Pseudomonas fluorescens (strain Pf0-1).